The chain runs to 270 residues: Regulatory protein RecX (270 aa).

Belongs to the RecX family.

It is found in the cytoplasm. Modulates RecA activity. The protein is Regulatory protein RecX of Bacillus cereus (strain B4264).